Reading from the N-terminus, the 313-residue chain is Tetraspanning orphan receptor (313 aa).

Topologically, residues 1–54 are extracellular; sequence PQCESETNFHYDIPPGYKDDVLVDVNNMSPSLVSDTQKHERGSHEVKIKHFSPY. The chain crosses the membrane as a helical span at residues 55–75; it reads IAVCVTTFSLAFCCFMVHAAI. The Cytoplasmic portion of the chain corresponds to 76–82; sequence TRQPTHL. Residues 83–103 form a helical membrane-spanning segment; it reads LPFFFIQVFDLIICLIHILGF. The Extracellular portion of the chain corresponds to 104–129; that stretch reads MSSTSDIRLVIHTKTGPIYIKSTGLT. A helical transmembrane segment spans residues 130 to 150; that stretch reads FIILSISCMMLAFKAYCLGMV. Residues 151–313 are Cytoplasmic-facing; the sequence is WDCYKYLMLN…NASSNAHSSC (163 aa). 2 disordered regions span residues 192 to 218 and 279 to 313; these read NNSI…YDPA and NTNT…HSSC. Low complexity predominate over residues 279-295; it reads NTNTSTTTSVISPLTTT. A compositionally biased stretch (polar residues) spans 301–313; the sequence is QINNASSNAHSSC.

In terms of assembly, interacts (via N-terminal extracellular domain) with human C2a. In terms of processing, phosphorylated on tyrosine residues.

The protein localises to the cell membrane. In terms of biological role, cell surface receptor that binds to human complement C2a protein. This results in inhibition of the classical and lectin pathways of complement activation, probably due to interference with binding of C2a to C4b and interference with cleavage by C1 or MASP2 such that C3 convertase cannot be formed. This infers resistance to complement-mediated cell lysis, allowing parasite survival and infection. This chain is Tetraspanning orphan receptor, found in Schistosoma haematobium (Blood fluke).